Consider the following 168-residue polypeptide: Pheromone-binding protein (168 aa).

The first 26 residues, 1 to 26 (MNKTTTKMKVAVVAIVVYLAVGNVDS), serve as a signal peptide directing secretion. Disulfide bonds link Cys45-Cys80, Cys76-Cys134, and Cys123-Cys143.

This sequence belongs to the PBP/GOBP family. Homodimer. Antenna.

This major soluble protein in olfactory sensilla of male moths might serve to solubilize the extremely hydrophobic pheromone molecules and to transport pheromone through the aqueous lymph to receptors located on olfactory cilia. PBP is also found in sensilla from female M.sexta antennae. The polypeptide is Pheromone-binding protein (Manduca sexta (Tobacco hawkmoth)).